The following is a 285-amino-acid chain: RNA exonuclease 4 (285 aa).

Residues Met-1–Lys-14 show a composition bias toward polar residues. Positions Met-1–Lys-35 are disordered. Residues Tyr-116 to Phe-267 enclose the Exonuclease domain.

This sequence belongs to the REXO4 family.

It is found in the nucleus. In terms of biological role, exoribonuclease involved in ribosome biosynthesis. Involved in the processing of ITS1, the internal transcribed spacer localized between the 18S and 5.8S rRNAs. This chain is RNA exonuclease 4 (REX4), found in Candida albicans (strain SC5314 / ATCC MYA-2876) (Yeast).